The following is a 294-amino-acid chain: UDP-3-O-acyl-N-acetylglucosamine deacetylase (294 aa).

Zn(2+) is bound by residues His75, His232, and Asp236. His259 serves as the catalytic Proton donor.

It belongs to the LpxC family. It depends on Zn(2+) as a cofactor.

The enzyme catalyses a UDP-3-O-[(3R)-3-hydroxyacyl]-N-acetyl-alpha-D-glucosamine + H2O = a UDP-3-O-[(3R)-3-hydroxyacyl]-alpha-D-glucosamine + acetate. It functions in the pathway glycolipid biosynthesis; lipid IV(A) biosynthesis; lipid IV(A) from (3R)-3-hydroxytetradecanoyl-[acyl-carrier-protein] and UDP-N-acetyl-alpha-D-glucosamine: step 2/6. In terms of biological role, catalyzes the hydrolysis of UDP-3-O-myristoyl-N-acetylglucosamine to form UDP-3-O-myristoylglucosamine and acetate, the committed step in lipid A biosynthesis. This chain is UDP-3-O-acyl-N-acetylglucosamine deacetylase, found in Campylobacter fetus subsp. fetus (strain 82-40).